A 97-amino-acid polypeptide reads, in one-letter code: YcgL domain-containing protein PSPTO_3921 (97 aa).

In terms of domain architecture, YcgL spans 3–87; sequence RICSIYRSPK…AEDEYIEHLP (85 aa).

The protein is YcgL domain-containing protein PSPTO_3921 of Pseudomonas syringae pv. tomato (strain ATCC BAA-871 / DC3000).